Here is a 255-residue protein sequence, read N- to C-terminus: Imidazole glycerol phosphate synthase subunit HisF (255 aa).

Residues Asp11 and Asp130 contribute to the active site.

This sequence belongs to the HisA/HisF family. Heterodimer of HisH and HisF.

The protein resides in the cytoplasm. The enzyme catalyses 5-[(5-phospho-1-deoxy-D-ribulos-1-ylimino)methylamino]-1-(5-phospho-beta-D-ribosyl)imidazole-4-carboxamide + L-glutamine = D-erythro-1-(imidazol-4-yl)glycerol 3-phosphate + 5-amino-1-(5-phospho-beta-D-ribosyl)imidazole-4-carboxamide + L-glutamate + H(+). The protein operates within amino-acid biosynthesis; L-histidine biosynthesis; L-histidine from 5-phospho-alpha-D-ribose 1-diphosphate: step 5/9. In terms of biological role, IGPS catalyzes the conversion of PRFAR and glutamine to IGP, AICAR and glutamate. The HisF subunit catalyzes the cyclization activity that produces IGP and AICAR from PRFAR using the ammonia provided by the HisH subunit. The protein is Imidazole glycerol phosphate synthase subunit HisF of Synechococcus sp. (strain ATCC 27144 / PCC 6301 / SAUG 1402/1) (Anacystis nidulans).